A 106-amino-acid chain; its full sequence is Cell division topological specificity factor (106 aa).

The protein belongs to the MinE family.

In terms of biological role, prevents the cell division inhibition by proteins MinC and MinD at internal division sites while permitting inhibition at polar sites. This ensures cell division at the proper site by restricting the formation of a division septum at the midpoint of the long axis of the cell. The chain is Cell division topological specificity factor from Prochlorococcus marinus subsp. pastoris (strain CCMP1986 / NIES-2087 / MED4).